We begin with the raw amino-acid sequence, 267 residues long: MENLYALILGIIEGLTEFLPISSTGHMILGTTILGIDIDEFWKSFLIIIQLGSILAVIFVFWRKLFQGLDIWLKLAVGFFPTGVIGLFVAKYLNALFNGWVVVGMLIFGGVVFILIELAHKNKQYRINSLEEISFKQAFCIGIFQSLAMIPGTSRSGASIIGGLLLGFNRKVAAEFSFLLAIPTMIIATAYSIYKEPELLSNANSLIPLGIGFITAFIVAVLVIKFFLKFISKFDFIPFGIYRIILGFVFFYLYYSGILNAGSEFKL.

Transmembrane regions (helical) follow at residues L4–T24, F41–F61, L69–V89, L96–I116, A173–I193, I207–F227, and F239–L259.

The protein belongs to the UppP family.

It is found in the cell inner membrane. The enzyme catalyses di-trans,octa-cis-undecaprenyl diphosphate + H2O = di-trans,octa-cis-undecaprenyl phosphate + phosphate + H(+). Catalyzes the dephosphorylation of undecaprenyl diphosphate (UPP). Confers resistance to bacitracin. The chain is Undecaprenyl-diphosphatase from Campylobacter jejuni subsp. jejuni serotype O:23/36 (strain 81-176).